A 154-amino-acid polypeptide reads, in one-letter code: Ribonuclease H (154 aa).

Positions 1–142 (MRKQVEIFTD…CDELARAAAS (142 aa)) constitute an RNase H type-1 domain. Mg(2+)-binding residues include D10, E48, D70, and D134.

This sequence belongs to the RNase H family. As to quaternary structure, monomer. It depends on Mg(2+) as a cofactor.

It is found in the cytoplasm. It catalyses the reaction Endonucleolytic cleavage to 5'-phosphomonoester.. Functionally, endonuclease that specifically degrades the RNA of RNA-DNA hybrids. This is Ribonuclease H from Pectobacterium atrosepticum (strain SCRI 1043 / ATCC BAA-672) (Erwinia carotovora subsp. atroseptica).